Consider the following 328-residue polypeptide: Ribosomal RNA small subunit methyltransferase H (328 aa).

S-adenosyl-L-methionine-binding positions include 64 to 66, D83, F112, D129, and Q136; that span reads GGH.

It belongs to the methyltransferase superfamily. RsmH family.

The protein resides in the cytoplasm. The catalysed reaction is cytidine(1402) in 16S rRNA + S-adenosyl-L-methionine = N(4)-methylcytidine(1402) in 16S rRNA + S-adenosyl-L-homocysteine + H(+). Functionally, specifically methylates the N4 position of cytidine in position 1402 (C1402) of 16S rRNA. This is Ribosomal RNA small subunit methyltransferase H from Bdellovibrio bacteriovorus (strain ATCC 15356 / DSM 50701 / NCIMB 9529 / HD100).